Reading from the N-terminus, the 241-residue chain is DNA repair protein RecO (241 aa).

Belongs to the RecO family.

Its function is as follows. Involved in DNA repair and RecF pathway recombination. The polypeptide is DNA repair protein RecO (Rickettsia canadensis (strain McKiel)).